The following is a 144-amino-acid chain: MKYLGIDYGTRRTGIAVTDGAGMMAFPRRTIVMSTRDAFFAELLSVVEEERPAGVVVGLPLLAGGEETLITRQVRNFVARLRRRSSLPVYLVAEELSSFEAGEDLREAGLSFREREAVVDQQAAVRILESFLNLPEDRRIPLEG.

Belongs to the YqgF nuclease family.

The protein localises to the cytoplasm. In terms of biological role, could be a nuclease involved in processing of the 5'-end of pre-16S rRNA. The polypeptide is Putative pre-16S rRNA nuclease (Oleidesulfovibrio alaskensis (strain ATCC BAA-1058 / DSM 17464 / G20) (Desulfovibrio alaskensis)).